The sequence spans 312 residues: MDGILILDKSPGKTSQKVVQEVKRILGVRKAGHAGTLDPLATGVLPLCLNEATKLVQFLSLDDKEYRATMLLGVTTETMDIEGRITDRREPEVDEVRIREALQFFTGPISQEPPRYSAVKFKGRPLYSWARKGVDIALPPRTVQVYSSILEEIALPYVTFRVACSKGTYIRTLCADLGERLGCGACMSVLRRLRCGCFTLETAVSLEDIADGKGRETLLSRVIPLSDGLRNVAAIEISEELSGRIRDGFQPDGSTLREYHIPSLADGDMVKFLTSSGGLVAVARFLYASDQLAVSDMGQPAVRILRVFHDRA.

Catalysis depends on Asp38, which acts as the Nucleophile.

Belongs to the pseudouridine synthase TruB family. Type 1 subfamily.

It catalyses the reaction uridine(55) in tRNA = pseudouridine(55) in tRNA. Its function is as follows. Responsible for synthesis of pseudouridine from uracil-55 in the psi GC loop of transfer RNAs. This Syntrophus aciditrophicus (strain SB) protein is tRNA pseudouridine synthase B.